We begin with the raw amino-acid sequence, 1493 residues long: Protein RNA-directed DNA methylation 3 (1493 aa).

Disordered regions lie at residues 1-34 (MDRKGKGKQVAGSDSYSGGQKRKNSVEFRDEGLR) and 54-96 (GYYG…SSFV). A Nuclear localization signal motif is present at residues 21 to 28 (KRKNSVEF). The segment covering 24-34 (NSVEFRDEGLR) has biased composition (basic and acidic residues). Acidic residues predominate over residues 60–80 (SDEDDDGLGFLNDMEDEPEVE). The segment covering 81–92 (ESSKAGKGEKGK) has biased composition (basic and acidic residues). One can recognise a KOW 1 domain in the interval 239–266 (KVSEGTWARVKNGKYKGDLAQIVAVSDT). A disordered region spans residues 393–432 (PTCREGGKGEGSGGGKGEGSGGGKGEGSRGGKGEGSSDFK). The span at 401 to 417 (GEGSGGGKGEGSGGGKG) shows a compositional bias: gly residues. Basic and acidic residues predominate over residues 418–432 (EGSRGGKGEGSSDFK). Residues 501–528 (QISVNDVVKISKGPSEGKQGVVRQVYRG) form the KOW 2 domain. Positions 578-602 (SSPKSPLSPEKEWQPRERYNSSNQG) are disordered. Positions 586 to 596 (PEKEWQPRERY) are enriched in basic and acidic residues. Positions 607 to 634 (TYSIGQKLRIRVGPLKGYLCRVIALRYS) constitute a KOW 3 domain. Disordered regions lie at residues 692–711 (IGAGTSSEGGNWNIGGPSTD), 728–747 (EKNPWGGSKPTSDVSPTVAD), and 757–1493 (AAEN…KTGW). Copy 1 of the repeat occupies 732 to 741 (WGGSKPTSDV). The segment at 732-1493 (WGGSKPTSDV…WGTGDKKTGW (762 aa)) is 42 X 9 AA approximate WG/GW-rich tandem repeats. Positions 757–767 (AAENKPASASD) are enriched in low complexity. 37 tandem repeats follow at residues 775-784 (WGKTPASEAG), 789-797 (WGDTSASNV), 818-827 (WGTHGGSSGG), 836-845 (WGKLCEASES), 854-863 (WGKKGGSDGE), 866-875 (WGNKDGNSSA), 883-892 (WGQQDKGSDE), 917-926 (GWNKSAEDSN), 935-943 (WGQPNDGSS), 944-953 (WGKKGDGAAS), 954-962 (WGKKDDGGS), 963-972 (WGKKDDGNKD), 978-987 (WGKKDDGQKD), 1003-1012 (WGKKDDGGSS), 1013-1022 (WGKKDDGGSL), 1023-1032 (WGKKDDGGSS), 1033-1042 (WGKEDDGGSL), 1043-1052 (WGKKDDGESS), 1053-1062 (WGKKDDGESS), 1063-1072 (WGKKDDGGSS), 1073-1082 (WGKKDEGGYS), 1132-1141 (WGKQDGDGGG), 1144-1153 (WGKENDAGGG), 1156-1165 (WGKQDNGVGS), 1167-1176 (WGKQNDGSGG), 1180-1189 (WGKQNDAGGG), 1192-1201 (WGKQDSGGDG), 1204-1213 (WGKQDGGGDS), 1217-1226 (WGKQNNTSGG), 1229-1238 (WGKQSDAGGG), 1241-1250 (WGKQDGGGGG), 1253-1262 (WGKQDGGGGS), 1266-1275 (WGKQNETSNG), 1278-1287 (WGKQNDSGGG), 1290-1299 (WGKQDGGGGG), 1302-1311 (WGKQNDGGGG), and 1314-1323 (WGKQGDGGSK). A compositionally biased stretch (polar residues) spans 790–812 (GDTSASNVEASSWEKQGASTSNV). Residues 846-860 (SQKKEESSWGKKGGS) are compositionally biased toward basic and acidic residues. Polar residues predominate over residues 866–875 (WGNKDGNSSA). The span at 955-1090 (GKKDDGGSWG…YSEQTFDRGG (136 aa)) shows a compositional bias: basic and acidic residues. Over residues 1122–1134 (PWSKPSGGSSWGK) the composition is skewed to low complexity. Residues 1156–1172 (WGKQDNGVGSSWGKQND) show a composition bias toward polar residues. The segment covering 1186-1213 (AGGGSSWGKQDSGGDGSSWGKQDGGGDS) has biased composition (gly residues). The span at 1218–1231 (GKQNNTSGGSSWGK) shows a compositional bias: polar residues. A compositionally biased stretch (gly residues) spans 1235–1264 (AGGGSSWGKQDGGGGGSSWGKQDGGGGSGS). Over residues 1270 to 1283 (NETSNGSSWGKQND) the composition is skewed to polar residues. Gly residues predominate over residues 1284–1321 (SGGGSSWGKQDGGGGGSSWGKQNDGGGGSSWGKQGDGG). Composition is skewed to polar residues over residues 1366–1382 (WKTDNQENTWKSDQSGG) and 1392–1401 (DSNNSKPSGS). Repeat 39 spans residues 1389-1398 (WGEDSNNSKP). Basic and acidic residues predominate over residues 1416–1430 (NSKKETNDKPGDDSK). The span at 1432 to 1442 (AWGTSNDQVNT) shows a compositional bias: polar residues. 3 repeat units span residues 1433–1442 (WGTSNDQVNT), 1467–1475 (WGGKTNAVA), and 1484–1493 (WGTGDKKTGW).

As to quaternary structure, interacts with AGO4 via its C-terminal region and with RNA transcripts. Binds chromatin at loci subject to transcriptional silencing downstream of RNA Polymerase V, but independently from the presence of 24-nt siRNA.

It is found in the nucleus. The protein resides in the nucleoplasm. Functionally, effector of RNA-directed DNA methylation (RdDM) triggered by small interfering RNAs (siRNAs, 24-nt RNAs). Functions as an adapter protein that binds scaffold transcripts generated by polymerase V and recruits AGO4 and AGO4-bound siRNAs to form an RdDM effector complex. Promotes the expression of 24-nt RNAs. Required for the initial establishment of DNA methylation. Together with AGO4, required for transcriptional gene silencing (TGS) by DNA methylation and repressive histone modifications (H3K9me2) of several chromatin loci. The polypeptide is Protein RNA-directed DNA methylation 3 (Arabidopsis thaliana (Mouse-ear cress)).